The primary structure comprises 272 residues: HMP-PP phosphatase (272 aa).

Residue D8 is the Nucleophile of the active site. Residues D8, D10, and D212 each coordinate Mg(2+).

The protein belongs to the HAD-like hydrolase superfamily. Cof family. Mg(2+) serves as cofactor.

The catalysed reaction is 4-amino-2-methyl-5-(diphosphooxymethyl)pyrimidine + H2O = 4-amino-2-methyl-5-(phosphooxymethyl)pyrimidine + phosphate + H(+). In terms of biological role, catalyzes the hydrolysis of 4-amino-2-methyl-5-hydroxymethylpyrimidine pyrophosphate (HMP-PP) to 4-amino-2-methyl-5-hydroxymethylpyrimidine phosphate (HMP-P). In Citrobacter koseri (strain ATCC BAA-895 / CDC 4225-83 / SGSC4696), this protein is HMP-PP phosphatase.